Reading from the N-terminus, the 438-residue chain is V-type ATP synthase beta chain (438 aa).

The protein belongs to the ATPase alpha/beta chains family.

In terms of biological role, produces ATP from ADP in the presence of a proton gradient across the membrane. The V-type beta chain is a regulatory subunit. The polypeptide is V-type ATP synthase beta chain (atpB) (Chlamydia pneumoniae (Chlamydophila pneumoniae)).